A 258-amino-acid chain; its full sequence is Spectinomycin 9-adenylyltransferase (258 aa).

The enzyme catalyses spectinomycin + ATP = 9-O-adenylylspectinomycin + diphosphate. Functionally, mediates bacterial resistance to spectinomycin, is probably a spectinomycin 9-adenylyltransferase. This chain is Spectinomycin 9-adenylyltransferase, found in Campylobacter jejuni.